Here is a 531-residue protein sequence, read N- to C-terminus: UDP-glucuronosyltransferase 1A7 (531 aa).

The first 25 residues, 1 to 25, serve as a signal peptide directing secretion; that stretch reads MAPADVPASLPLGLCLLLASGFGHA. Asparagine 71, asparagine 293, and asparagine 431 each carry an N-linked (GlcNAc...) asparagine glycan. The helical transmembrane segment at 487 to 503 threads the bilayer; the sequence is LDVIGFLLAIVLTVVFI.

It belongs to the UDP-glycosyltransferase family. As to quaternary structure, homodimer. Homooligomer. Interacts with UGT1A1, UGT1A3, UGT1A4, UGT1A6, UGT1A8, UGT1A9 and UGT1A10 to form heterodimers.

It is found in the endoplasmic reticulum membrane. It carries out the reaction glucuronate acceptor + UDP-alpha-D-glucuronate = acceptor beta-D-glucuronoside + UDP + H(+). The catalysed reaction is 17alpha-estradiol + UDP-alpha-D-glucuronate = 17alpha-estradiol 3-O-(beta-D-glucuronate) + UDP + H(+). The enzyme catalyses prunetin + UDP-alpha-D-glucuronate = prunetin-5-O-beta-D-glucuronide + UDP. It catalyses the reaction 5-epi-5-F2t-IsoP + UDP-alpha-D-glucuronate = 5-epi-5-F2t-IsoP-glucuronide + UDP + H(+). It carries out the reaction (E)-ferulate + UDP-alpha-D-glucuronate = (E)-ferulic acid beta-D-glucuronate ester + UDP. The catalysed reaction is candesartan + UDP-alpha-D-glucuronate = candesartan O-beta-D-glucuronoside + UDP. The enzyme catalyses SN-38 + UDP-alpha-D-glucuronate = SN-38 O-beta-D-glucuronide + UDP + H(+). It catalyses the reaction mycophenolate + UDP-alpha-D-glucuronate = mycophenolate 7-O-beta-D-glucuronide + UDP + H(+). Functionally, UDP-glucuronosyltransferase (UGT) that catalyzes phase II biotransformation reactions in which lipophilic substrates are conjugated with glucuronic acid to increase the metabolite's water solubility, thereby facilitating excretion into either the urine or bile. Essential for the elimination and detoxification of drugs, xenobiotics and endogenous compounds. Catalyzes the glucuronidation of endogenous estrogen hormone epiestradiol. Involved in the glucuronidation of F2-isoprostane (5-epi-5-F2t-IsoP). Involved in the glucuronidation of the phytochemical ferulic acid at the carboxylic acid group. Also catalyzes the glucuronidation of the isoflavones genistein, daidzein, glycitein, formononetin, biochanin A and prunetin, which are phytoestrogens with anticancer and cardiovascular properties. Involved in the glucuronidation of the AGTR1 angiotensin receptor antagonist caderastan, a drug which can inhibit the effect of angiotensin II. Involved in the biotransformation of 7-ethyl-10-hydroxycamptothecin (SN-38), the pharmacologically active metabolite of the anticancer drug irinotecan. Also metabolizes mycophenolate, an immunosuppressive agent. In Rattus norvegicus (Rat), this protein is UDP-glucuronosyltransferase 1A7.